A 160-amino-acid polypeptide reads, in one-letter code: Small ribosomal subunit protein uS7 (160 aa).

It belongs to the universal ribosomal protein uS7 family. In terms of assembly, part of the 30S ribosomal subunit. Contacts proteins S9 and S11.

Its function is as follows. One of the primary rRNA binding proteins, it binds directly to 16S rRNA where it nucleates assembly of the head domain of the 30S subunit. Is located at the subunit interface close to the decoding center, probably blocks exit of the E-site tRNA. The protein is Small ribosomal subunit protein uS7 of Ehrlichia ruminantium (strain Gardel).